Here is a 142-residue protein sequence, read N- to C-terminus: Large ribosomal subunit protein uL13 (142 aa).

Belongs to the universal ribosomal protein uL13 family. In terms of assembly, part of the 50S ribosomal subunit.

Functionally, this protein is one of the early assembly proteins of the 50S ribosomal subunit, although it is not seen to bind rRNA by itself. It is important during the early stages of 50S assembly. This Vesicomyosocius okutanii subsp. Calyptogena okutanii (strain HA) protein is Large ribosomal subunit protein uL13.